We begin with the raw amino-acid sequence, 617 residues long: Proline--tRNA ligase (617 aa).

Belongs to the class-II aminoacyl-tRNA synthetase family. ProS type 1 subfamily. As to quaternary structure, homodimer.

It localises to the cytoplasm. The catalysed reaction is tRNA(Pro) + L-proline + ATP = L-prolyl-tRNA(Pro) + AMP + diphosphate. Catalyzes the attachment of proline to tRNA(Pro) in a two-step reaction: proline is first activated by ATP to form Pro-AMP and then transferred to the acceptor end of tRNA(Pro). As ProRS can inadvertently accommodate and process non-cognate amino acids such as alanine and cysteine, to avoid such errors it has two additional distinct editing activities against alanine. One activity is designated as 'pretransfer' editing and involves the tRNA(Pro)-independent hydrolysis of activated Ala-AMP. The other activity is designated 'posttransfer' editing and involves deacylation of mischarged Ala-tRNA(Pro). The misacylated Cys-tRNA(Pro) is not edited by ProRS. The chain is Proline--tRNA ligase from Streptococcus pneumoniae serotype 19F (strain G54).